Consider the following 465-residue polypeptide: Plasma alpha-L-fucosidase (465 aa).

Positions 1–26 (MRPQELPRLAFPLLLLLLLPPPPCPA) are cleaved as a signal peptide. N-linked (GlcNAc...) asparagine glycosylation is found at N169 and N237. Position 299 is a phosphoserine (S299). Residue N375 is glycosylated (N-linked (GlcNAc...) asparagine).

Belongs to the glycosyl hydrolase 29 family. In terms of assembly, homotetramer.

It localises to the secreted. The catalysed reaction is an alpha-L-fucoside + H2O = L-fucose + an alcohol. Functionally, alpha-L-fucosidase is responsible for hydrolyzing the alpha-1,6-linked fucose joined to the reducing-end N-acetylglucosamine of the carbohydrate moieties of glycoproteins. In Pongo abelii (Sumatran orangutan), this protein is Plasma alpha-L-fucosidase (FUCA2).